The chain runs to 340 residues: Phosphate acyltransferase (340 aa).

Belongs to the PlsX family. In terms of assembly, homodimer. Probably interacts with PlsY.

It localises to the cytoplasm. The enzyme catalyses a fatty acyl-[ACP] + phosphate = an acyl phosphate + holo-[ACP]. Its pathway is lipid metabolism; phospholipid metabolism. In terms of biological role, catalyzes the reversible formation of acyl-phosphate (acyl-PO(4)) from acyl-[acyl-carrier-protein] (acyl-ACP). This enzyme utilizes acyl-ACP as fatty acyl donor, but not acyl-CoA. In Helicobacter pylori (strain HPAG1), this protein is Phosphate acyltransferase.